We begin with the raw amino-acid sequence, 523 residues long: DNA-(apurinic or apyrimidinic site) endonuclease 2 (523 aa).

Glu42 is a Mg(2+) binding site. Tyr151 is an active-site residue. Mg(2+) is bound by residues Asp191, Asn193, and Asp294. The active-site Proton donor/acceptor is Asp191. A disordered region spans residues 348-392 (MKKNKNNSPTQSENVSASASSGSSPTVSRANSVIDVDAYPPEKRR). The segment covering 353–362 (NNSPTQSENV) has biased composition (polar residues). Zn(2+) contacts are provided by Cys458, His461, Cys484, and Cys508. The segment at 458–517 (CEGHKEPCKYLTVRKPGINYGRKFWICARPVGELIKNSNAVSEEDTQPFQCRFFIWDSDW) adopts a GRF-type zinc-finger fold.

This sequence belongs to the DNA repair enzymes AP/ExoA family. It depends on Mg(2+) as a cofactor. Requires Mn(2+) as cofactor.

The protein resides in the nucleus. It catalyses the reaction Exonucleolytic cleavage in the 3'- to 5'-direction to yield nucleoside 5'-phosphates.. Its function is as follows. DNA repair enzyme that cleaves apurinic/apyrimidinic (AP) sites and removes 3'-blocking groups present at single strand breaks of damaged DNA. Provides the majority of the AP-endonuclease (APE) activity. Repairs phleomycin D1-induced DNA damage. Plays a role in oxidative damage repair. In Schizosaccharomyces pombe (strain 972 / ATCC 24843) (Fission yeast), this protein is DNA-(apurinic or apyrimidinic site) endonuclease 2 (apn2).